Consider the following 296-residue polypeptide: NAD kinase (296 aa).

Aspartate 73 serves as the catalytic Proton acceptor. NAD(+) is bound by residues 73-74, lysine 78, 151-152, arginine 178, aspartate 180, and 191-196; these read DG, NE, and TAHAMS.

This sequence belongs to the NAD kinase family. A divalent metal cation serves as cofactor.

It localises to the cytoplasm. The enzyme catalyses NAD(+) + ATP = ADP + NADP(+) + H(+). Involved in the regulation of the intracellular balance of NAD and NADP, and is a key enzyme in the biosynthesis of NADP. Catalyzes specifically the phosphorylation on 2'-hydroxyl of the adenosine moiety of NAD to yield NADP. This chain is NAD kinase, found in Francisella tularensis subsp. tularensis (strain WY96-3418).